The following is a 94-amino-acid chain: Pyrimidine/purine nucleoside phosphorylase (94 aa).

This sequence belongs to the nucleoside phosphorylase PpnP family.

The enzyme catalyses a purine D-ribonucleoside + phosphate = a purine nucleobase + alpha-D-ribose 1-phosphate. The catalysed reaction is adenosine + phosphate = alpha-D-ribose 1-phosphate + adenine. It catalyses the reaction cytidine + phosphate = cytosine + alpha-D-ribose 1-phosphate. It carries out the reaction guanosine + phosphate = alpha-D-ribose 1-phosphate + guanine. The enzyme catalyses inosine + phosphate = alpha-D-ribose 1-phosphate + hypoxanthine. The catalysed reaction is thymidine + phosphate = 2-deoxy-alpha-D-ribose 1-phosphate + thymine. It catalyses the reaction uridine + phosphate = alpha-D-ribose 1-phosphate + uracil. It carries out the reaction xanthosine + phosphate = alpha-D-ribose 1-phosphate + xanthine. Its function is as follows. Catalyzes the phosphorolysis of diverse nucleosides, yielding D-ribose 1-phosphate and the respective free bases. Can use uridine, adenosine, guanosine, cytidine, thymidine, inosine and xanthosine as substrates. Also catalyzes the reverse reactions. The polypeptide is Pyrimidine/purine nucleoside phosphorylase (Salmonella arizonae (strain ATCC BAA-731 / CDC346-86 / RSK2980)).